We begin with the raw amino-acid sequence, 429 residues long: 3-phosphoshikimate 1-carboxyvinyltransferase (429 aa).

The 3-phosphoshikimate site is built by K22, S23, and R27. K22 provides a ligand contact to phosphoenolpyruvate. Phosphoenolpyruvate-binding residues include G94 and R122. Residues S167, Q169, D315, and K342 each coordinate 3-phosphoshikimate. Phosphoenolpyruvate is bound at residue Q169. D315 functions as the Proton acceptor in the catalytic mechanism. Phosphoenolpyruvate contacts are provided by R346 and R388.

Belongs to the EPSP synthase family. As to quaternary structure, monomer.

It localises to the cytoplasm. The enzyme catalyses 3-phosphoshikimate + phosphoenolpyruvate = 5-O-(1-carboxyvinyl)-3-phosphoshikimate + phosphate. The protein operates within metabolic intermediate biosynthesis; chorismate biosynthesis; chorismate from D-erythrose 4-phosphate and phosphoenolpyruvate: step 6/7. In terms of biological role, catalyzes the transfer of the enolpyruvyl moiety of phosphoenolpyruvate (PEP) to the 5-hydroxyl of shikimate-3-phosphate (S3P) to produce enolpyruvyl shikimate-3-phosphate and inorganic phosphate. The protein is 3-phosphoshikimate 1-carboxyvinyltransferase of Geobacter metallireducens (strain ATCC 53774 / DSM 7210 / GS-15).